The sequence spans 270 residues: MKKNRAFLKWAGGKYPLVDEIRRHLPAGDCLIEPFVGAGSVFLNTDYDAYILADINSDLINLYNIVKLRTDDFVRDARTLFADEFNNSDQFYLLREEFNTSTEPYRRALLFLYLNRHCYNGLCRYNLRGEFNVPFGRYKKPYFPEEELYWFAEKSRNATFVCEHYRDTMAKAAAGAVVYCDPPYAPLSATANFTAYHTNSFSIADQQSLAHLAHQLSVESRVPVLISNHDTELTRDWYQHAALYVVKARRTISRNILGRSKVNELLALYR.

Trp-10, Lys-14, Asp-54, and Asp-181 together coordinate S-adenosyl-L-methionine.

Belongs to the N(4)/N(6)-methyltransferase family.

The catalysed reaction is a 2'-deoxyadenosine in DNA + S-adenosyl-L-methionine = an N(6)-methyl-2'-deoxyadenosine in DNA + S-adenosyl-L-homocysteine + H(+). Functionally, an alpha subtype methylase, recognizes the double-stranded sequence 5'-GATC-3' and methylates A-2. Overexpression leads to hypermutability. May be involved in methyl-directed DNA mismatch repair, initiation of chromosome replication and gene expression. This Serratia marcescens protein is DNA adenine methylase.